The sequence spans 185 residues: Ribosome-recycling factor (185 aa).

It belongs to the RRF family.

It localises to the cytoplasm. In terms of biological role, responsible for the release of ribosomes from messenger RNA at the termination of protein biosynthesis. May increase the efficiency of translation by recycling ribosomes from one round of translation to another. This chain is Ribosome-recycling factor, found in Xanthomonas oryzae pv. oryzae (strain MAFF 311018).